The primary structure comprises 355 residues: Protein MxiC (355 aa).

It localises to the secreted. It is found in the host cell. In terms of biological role, necessary for the secretion of IPA invasins. In Shigella flexneri, this protein is Protein MxiC (mxiC).